The following is a 163-amino-acid chain: Phosphopantetheine adenylyltransferase (163 aa).

T9 is a substrate binding site. ATP contacts are provided by residues T9–F10 and H17. Substrate contacts are provided by K41, T73, and R87. ATP contacts are provided by residues G88 to R90, E98, and F123 to S129.

Belongs to the bacterial CoaD family. Homohexamer. Mg(2+) is required as a cofactor.

The protein resides in the cytoplasm. It carries out the reaction (R)-4'-phosphopantetheine + ATP + H(+) = 3'-dephospho-CoA + diphosphate. It participates in cofactor biosynthesis; coenzyme A biosynthesis; CoA from (R)-pantothenate: step 4/5. Its function is as follows. Reversibly transfers an adenylyl group from ATP to 4'-phosphopantetheine, yielding dephospho-CoA (dPCoA) and pyrophosphate. The polypeptide is Phosphopantetheine adenylyltransferase (Desulfitobacterium hafniense (strain DSM 10664 / DCB-2)).